Consider the following 159-residue polypeptide: Small ribosomal subunit protein uS9 (159 aa).

It belongs to the universal ribosomal protein uS9 family.

This Methylocella silvestris (strain DSM 15510 / CIP 108128 / LMG 27833 / NCIMB 13906 / BL2) protein is Small ribosomal subunit protein uS9.